The following is a 154-amino-acid chain: Interleukin-7 (154 aa).

The first 25 residues, 1-25, serve as a signal peptide directing secretion; the sequence is MFHVSFRYIFGIPPLILVLLPVTSS. Disulfide bonds link Cys-27-Cys-145, Cys-58-Cys-133, and Cys-71-Cys-116. N-linked (GlcNAc...) asparagine glycosylation is found at Asn-94 and Asn-115.

This sequence belongs to the IL-7/IL-9 family. In terms of assembly, interacts with IL7R and CSF2RG. In terms of processing, three disulfide bonds are present.

The protein resides in the secreted. Functionally, hematopoietic cytokine that plays an essential role in the development, expansion, and survival of naive and memory T-cells and B-cells thereby regulating the number of mature lymphocytes and maintaining lymphoid homeostasis. Mechanistically, exerts its biological effects through a receptor composed of IL7RA subunit and the cytokine receptor common subunit gamma/CSF2RG. Binding to the receptor leads to activation of various kinases including JAK1 or JAK3 depending on the cell type and subsequently propagation of signals through activation of several downstream signaling pathways including the PI3K/Akt/mTOR or the JAK-STAT5. The polypeptide is Interleukin-7 (Il7) (Rattus norvegicus (Rat)).